Consider the following 234-residue polypeptide: DNA repair and recombination protein RadB (234 aa).

It belongs to the eukaryotic RecA-like protein family. RadB subfamily.

Functionally, involved in DNA repair and in homologous recombination. May regulate the cleavage reactions of the branch-structured DNA. Has a very weak ATPase activity that is not stimulated by DNA. Binds DNA but does not promote DNA strands exchange. The sequence is that of DNA repair and recombination protein RadB from Methanobrevibacter smithii (strain ATCC 35061 / DSM 861 / OCM 144 / PS).